The chain runs to 633 residues: Extracellular metalloproteinase mep (633 aa).

The signal sequence occupies residues 1-18 (MRLLSLAGAMALPLCVLA). The propeptide occupies 19–244 (HPTHRTRGIA…IHGVVDYISD (226 aa)). Residue asparagine 326 is glycosylated (N-linked (GlcNAc...) asparagine). Histidine 428 contacts Zn(2+). Residue glutamate 429 is part of the active site. Position 432 (histidine 432) interacts with Zn(2+). Asparagine 514 carries N-linked (GlcNAc...) asparagine glycosylation.

The protein belongs to the peptidase M36 family. It depends on Zn(2+) as a cofactor.

The protein localises to the secreted. In terms of biological role, secreted metalloproteinase that allows assimilation of proteinaceous substrates. The sequence is that of Extracellular metalloproteinase mep (mep) from Aspergillus terreus (strain NIH 2624 / FGSC A1156).